A 61-amino-acid polypeptide reads, in one-letter code: Large ribosomal subunit protein bL28 (61 aa).

The interval 1 to 26 (MAKDFVTGRKTTFGKKRSHALNQTNR) is disordered.

The protein belongs to the bacterial ribosomal protein bL28 family.

This Ligilactobacillus salivarius (strain UCC118) (Lactobacillus salivarius) protein is Large ribosomal subunit protein bL28.